Here is a 702-residue protein sequence, read N- to C-terminus: Ribosomal RNA large subunit methyltransferase K/L (702 aa).

In terms of domain architecture, THUMP spans L43–L154.

Belongs to the methyltransferase superfamily. RlmKL family.

The protein resides in the cytoplasm. It carries out the reaction guanosine(2445) in 23S rRNA + S-adenosyl-L-methionine = N(2)-methylguanosine(2445) in 23S rRNA + S-adenosyl-L-homocysteine + H(+). It catalyses the reaction guanosine(2069) in 23S rRNA + S-adenosyl-L-methionine = N(2)-methylguanosine(2069) in 23S rRNA + S-adenosyl-L-homocysteine + H(+). Functionally, specifically methylates the guanine in position 2445 (m2G2445) and the guanine in position 2069 (m7G2069) of 23S rRNA. The polypeptide is Ribosomal RNA large subunit methyltransferase K/L (Escherichia coli (strain K12 / DH10B)).